Reading from the N-terminus, the 1377-residue chain is DNA-directed RNA polymerase subunit beta' (1377 aa).

C60, C62, C75, and C78 together coordinate Zn(2+). Residues D449, D451, and D453 each contribute to the Mg(2+) site. Residues C777, C851, C858, and C861 each coordinate Zn(2+).

This sequence belongs to the RNA polymerase beta' chain family. In terms of assembly, the RNAP catalytic core consists of 2 alpha, 1 beta, 1 beta' and 1 omega subunit. When a sigma factor is associated with the core the holoenzyme is formed, which can initiate transcription. The cofactor is Mg(2+). Zn(2+) serves as cofactor.

It catalyses the reaction RNA(n) + a ribonucleoside 5'-triphosphate = RNA(n+1) + diphosphate. In terms of biological role, DNA-dependent RNA polymerase catalyzes the transcription of DNA into RNA using the four ribonucleoside triphosphates as substrates. In Borrelia hermsii (strain HS1 / DAH), this protein is DNA-directed RNA polymerase subunit beta'.